Reading from the N-terminus, the 386-residue chain is Histidinol-phosphate aminotransferase (386 aa).

Polar residues predominate over residues 1 to 11 (MMVRKSTASNR). Positions 1–22 (MMVRKSTASNRRLQDKGDEEPV) are disordered. K248 is subject to N6-(pyridoxal phosphate)lysine.

It belongs to the class-II pyridoxal-phosphate-dependent aminotransferase family. Histidinol-phosphate aminotransferase subfamily. Homodimer. It depends on pyridoxal 5'-phosphate as a cofactor.

The enzyme catalyses L-histidinol phosphate + 2-oxoglutarate = 3-(imidazol-4-yl)-2-oxopropyl phosphate + L-glutamate. The protein operates within amino-acid biosynthesis; L-histidine biosynthesis; L-histidine from 5-phospho-alpha-D-ribose 1-diphosphate: step 7/9. In Moorella thermoacetica (strain ATCC 39073 / JCM 9320), this protein is Histidinol-phosphate aminotransferase.